The primary structure comprises 208 residues: Ribosomal RNA large subunit methyltransferase E (208 aa).

Positions 61, 63, 81, 97, and 122 each coordinate S-adenosyl-L-methionine. Residue Lys162 is the Proton acceptor of the active site.

The protein belongs to the class I-like SAM-binding methyltransferase superfamily. RNA methyltransferase RlmE family.

It is found in the cytoplasm. The catalysed reaction is uridine(2552) in 23S rRNA + S-adenosyl-L-methionine = 2'-O-methyluridine(2552) in 23S rRNA + S-adenosyl-L-homocysteine + H(+). Functionally, specifically methylates the uridine in position 2552 of 23S rRNA at the 2'-O position of the ribose in the fully assembled 50S ribosomal subunit. This is Ribosomal RNA large subunit methyltransferase E from Pseudomonas putida (strain W619).